Reading from the N-terminus, the 546-residue chain is Chaperonin GroEL (546 aa).

ATP contacts are provided by residues 30-33 (TLGP), Lys51, 87-91 (DGTTT), Gly415, 479-481 (NAA), and Asp495. Residues 526-546 (KKDEPAMPAGGGMGGMGGMDF) are disordered. Residues 534 to 546 (AGGGMGGMGGMDF) are compositionally biased toward gly residues.

The protein belongs to the chaperonin (HSP60) family. Forms a cylinder of 14 subunits composed of two heptameric rings stacked back-to-back. Interacts with the co-chaperonin GroES.

The protein localises to the cytoplasm. It carries out the reaction ATP + H2O + a folded polypeptide = ADP + phosphate + an unfolded polypeptide.. Its function is as follows. Together with its co-chaperonin GroES, plays an essential role in assisting protein folding. The GroEL-GroES system forms a nano-cage that allows encapsulation of the non-native substrate proteins and provides a physical environment optimized to promote and accelerate protein folding. The chain is Chaperonin GroEL from Xanthomonas oryzae pv. oryzae (strain MAFF 311018).